The sequence spans 513 residues: ATP synthase subunit alpha (513 aa).

169 to 176 contacts ATP; the sequence is GDRQTGKT.

This sequence belongs to the ATPase alpha/beta chains family. In terms of assembly, F-type ATPases have 2 components, CF(1) - the catalytic core - and CF(0) - the membrane proton channel. CF(1) has five subunits: alpha(3), beta(3), gamma(1), delta(1), epsilon(1). CF(0) has three main subunits: a(1), b(2) and c(9-12). The alpha and beta chains form an alternating ring which encloses part of the gamma chain. CF(1) is attached to CF(0) by a central stalk formed by the gamma and epsilon chains, while a peripheral stalk is formed by the delta and b chains.

It localises to the cell inner membrane. It catalyses the reaction ATP + H2O + 4 H(+)(in) = ADP + phosphate + 5 H(+)(out). Produces ATP from ADP in the presence of a proton gradient across the membrane. The alpha chain is a regulatory subunit. In Methylobacillus flagellatus (strain ATCC 51484 / DSM 6875 / VKM B-1610 / KT), this protein is ATP synthase subunit alpha.